A 561-amino-acid polypeptide reads, in one-letter code: Nucleoprotein (561 aa).

The segment at 53–237 (MRKDKRSEAD…ITQEPAQINI (185 aa)) is binding site for the cap structure m7GTP. The Mn(2+) site is built by aspartate 380 and glutamate 382. Residues glutamate 390, cysteine 497, histidine 500, and cysteine 521 each contribute to the Zn(2+) site. Position 525 (aspartate 525) interacts with Mn(2+).

This sequence belongs to the arenaviridae nucleocapsid protein family. Homomultimerizes to form the nucleocapsid. Binds to viral genomic RNA. Interacts with glycoprotein G2. Interacts with protein Z; this interaction probably directs the encapsidated genome to budding sites. Interacts with protein L; this interaction does not interfere with Z-L interaction. Interacts with host IKBKE (via Protein kinase domain); the interaction inhibits IKBKE kinase activity.

The protein resides in the virion. It is found in the host cytoplasm. In terms of biological role, encapsidates the genome, protecting it from nucleases. The encapsidated genomic RNA is termed the nucleocapsid (NC). Serves as template for viral transcription and replication. The increased presence of protein N in host cell does not seem to trigger the switch from transcription to replication as observed in other negative strain RNA viruses. Through the interaction with host IKBKE, strongly inhibits the phosphorylation and nuclear translocation of host IRF3, a protein involved in interferon activation pathway, leading to the inhibition of interferon-beta and IRF3-dependent promoters activation. Also encodes a functional 3'-5' exoribonuclease that degrades preferentially dsRNA substrates and thereby participates in the suppression of interferon induction. This Allpahuayo mammarenavirus (isolate Rat/Peru/CLHP-2472/1997) (ALLV) protein is Nucleoprotein.